Consider the following 846-residue polypeptide: Selenocysteine insertion sequence-binding protein 2 (846 aa).

2 stretches are compositionally biased toward basic and acidic residues: residues 151–165 (RRAWEEQKSSNRRAD) and 206–215 (PEFEFSRLDF). Disordered regions lie at residues 151–246 (RRAW…SNMS), 266–288 (TDHTDGAVTNNAATSSPSCTREL), 321–440 (TTSS…VPVQ), 448–467 (AALEKQQHAPHAKPSSRPVV), and 475–613 (VLSK…DSAT). Ser220 carries the post-translational modification Phosphoserine. 3 stretches are compositionally biased toward polar residues: residues 220–232 (SPKNSNLPETQKQ), 272–288 (AVTNNAATSSPSCTREL), and 321–342 (TTSSADAKNVSVTSEALSSDPS). The Nuclear localization signal motif lies at 370 to 380 (KKNKKKKEKSK). The segment covering 417–428 (KLQSKQQAQNDF) has biased composition (polar residues). Over residues 527 to 536 (ILKERQERMQ) the composition is skewed to basic and acidic residues. Residues 542–551 (SAVSPTVASD) show a composition bias toward polar residues. The segment at 666–687 (LVLGLREVLKHLKLRKLKCIII) is RNA-binding. The interval 774 to 804 (RQEQAGEPGPQTPPSPPMQDPIQSTDEGTLA) is disordered. Residues 783–792 (PQTPPSPPMQ) show a composition bias toward pro residues.

In terms of tissue distribution, ubiquitous.

It localises to the cytoplasm. The protein localises to the nucleus. Its function is as follows. mRNA-binding protein that binds to the SECIS (selenocysteine insertion sequence) element present in the 3'-UTR of mRNAs encoding selenoproteins and facilitates the incorporation of the rare amino acid selenocysteine. Insertion of selenocysteine at UGA codons is mediated by SECISBP2 and EEFSEC: SECISBP2 (1) specifically binds the SECIS sequence once the 80S ribosome encounters an in-frame UGA codon and (2) contacts the RPS27A/eS31 of the 40S ribosome before ribosome stalling. (3) GTP-bound EEFSEC then delivers selenocysteinyl-tRNA(Sec) to the 80S ribosome and adopts a preaccommodated state conformation. (4) After GTP hydrolysis, EEFSEC dissociates from the assembly, selenocysteinyl-tRNA(Sec) accommodates, and peptide bond synthesis and selenoprotein elongation occur. The polypeptide is Selenocysteine insertion sequence-binding protein 2 (Secisbp2) (Rattus norvegicus (Rat)).